Reading from the N-terminus, the 277-residue chain is Putative hydro-lyase BP1875 (277 aa).

This sequence belongs to the D-glutamate cyclase family.

The polypeptide is Putative hydro-lyase BP1875 (Bordetella pertussis (strain Tohama I / ATCC BAA-589 / NCTC 13251)).